A 487-amino-acid chain; its full sequence is MPTFYLALHGGQTYHLIVDTDSLGNPSLSVIPSNPYQEQLSDTPLIPLTIFVGENTGVPPPLPPPPPPPPPPPPPPPPPPPPPPPPPPSPPPPPPPPPPPQRRDAWTQEPSPLDRDPLGYDVGHGPLASAMRMLWMANYIVRQSRGDRGLILPQGPQTAPQARLVQPHVPPLRPTAPTILSPLSQPRLTPPQPLMMPPRPTPPTPLPPATLTVPPRPTRPTTLPPTPLLTVLQRPTELQPTPSPPRMHLPVLHVPDQSMHPLTHQSTPNDPDSPEPRSPTVFYNIPPMPLPPSQLPPPAAPAQPPPGVINDQQLHHLPSGPPWWPPICDPPQPSKTQGQSRGQSRGRGRGRGRGRGKGKSRDKQRKPGGPWRPEPNTSSPSMPELSPVLGLHQGQGAGDSPTPGPSNAAPVCRNSHTATPNVSPIHEPESHNSPEAPILFPDDWYPPSIDPADLDESWDYIFETTESPSSDEDYVEGPSKRPRPSIQ.

Positions 1-210 (MPTFYLALHG…TPPTPLPPAT (210 aa)) are SMARCB1/INI1 binding. Disordered stretches follow at residues 52 to 121 (VGEN…LGYD) and 258 to 487 (SMHP…PSIQ). Over residues 58-100 (VPPPLPPPPPPPPPPPPPPPPPPPPPPPPPPSPPPPPPPPPPP) the composition is skewed to pro residues. Positions 101–118 (QRRDAWTQEPSPLDRDPL) are enriched in basic and acidic residues. Pro residues-rich tracts occupy residues 286-307 (PPMP…PPPG) and 319-333 (SGPP…PPQP). Basic residues predominate over residues 344 to 366 (SRGRGRGRGRGRGKGKSRDKQRK). 7 consecutive repeat copies span residues 345–346 (RG), 347–348 (RG), 349–350 (RG), 351–352 (RG), 353–354 (RG), 355–356 (RG), and 357–358 (KG). A 6.5 X 2 AA tandem repeats of R-G region spans residues 345 to 358 (RGRGRGRGRGRGKG). 2 consecutive short sequence motifs (PXLXP motif, interaction with host ZMYND11) follow at residues 383–387 (PELSP) and 437–441 (PILFP).

This sequence belongs to the herpesviridae EBNA2 family. As to quaternary structure, interacts with human SMARCB1/INI1, presumably generating an open chromatin conformation at the EBNA2-responsive target genes. Interacts with human WAPL. Interacts with host CBF1; this interaction allows transcriptional activation by EBNA2. Interacts with host general transcription factors GTF2B, ERCC2 and ERCC3. Interacts (via PXLXP motif) with host ZMYND11/BS69 (via MYND-type zinc finger). Interacts with host EBF1. In terms of processing, phosphorylated.

The protein resides in the host nucleus matrix. Plays a key role in the activation of the host resting B-cell and stimulation of B-cell proliferation. Acts by up-regulating the expression of viral EBNA1-6, LMP1, LMP2A and LMP2B genes, as well as several host genes including CD21, CD23 and MYC. Activates transcription by acting as an adapter molecule that binds to cellular sequence-specific DNA-binding proteins such as host CBF1, SMARCB1 and SPI1. Once EBNA2 is near promoter sites, its acidic activating domain recruits basal and activation-associated transcription factors TFIIB, TAF40, TFIIH components ERCC2 and ERCC3, and CBP in order to promote transcription. Alternatively, EBNA2 can affect activities of cell cycle regulators and retard cell cycle progression at G2/M phase. It also induces chromosomal instability, by disrupting mitotic checkpoints, multi-nucleation and formation of micronuclei in infected cells. The polypeptide is Epstein-Barr nuclear antigen 2 (EBNA2) (Homo sapiens (Human)).